Reading from the N-terminus, the 144-residue chain is uncharacterized protein (144 aa).

Residues 13–120 form the HIT domain; the sequence is IFCGIVEGNV…VPKYETGLGF (108 aa). The short motif at 105–109 is the Histidine triad motif element; sequence HYHMH.

This is an uncharacterized protein from Mycoplasma pneumoniae (strain ATCC 29342 / M129 / Subtype 1) (Mycoplasmoides pneumoniae).